Consider the following 479-residue polypeptide: MTAHIGLSAQHVVDSLGHPDGASRPPVSAESLSRASELLQSNHDTWHIFFREATGHNHMAHSILTALALGASPSELERAYTDTEAIQRPIPAVDPMILTRLDADPQALESLLGWSDLYSTFLTYFQSQIDRHGWQSVVTTYVFSETPLAEKLLIKLYEGMYHSLIHLGLGIEFGQPGIIAEALAQAAAHEDGHIDKLLLGVEAAIAAKDDTRTETTVPKSLVQLVDEVRSHPRIWADLRFGDRWNRMRDSIMDRAADELIPIAAQFRIPASGMMMMAGEHADLLTIRTAEMASTAAYLAGASQSARRPRKIDFFLMHTVTASLFFSVFNAQEWIPRAMRVRLVEWKGRLDLAFYAFCKSPELDACVISDYSDDFTRDMDWAALYAAVNQEHDDGHVAKFMRALRHAERLSRPYEQHPVWAEHFPVKGNMWIKLARMALETTRHSPPDFKWIMGTGFDEAWERPDLKLAENRGQQGQSVP.

Positions 14–34 (DSLGHPDGASRPPVSAESLSR) are disordered.

It belongs to the AflY oxidoreductase family.

It participates in secondary metabolite biosynthesis. Baeyer-Villiger monooxygenase; part of the gene cluster that mediates the biosynthesis of the tetrahydroxanthone dimer secalonic acid D. The pathway begins with the synthesis of atrochrysone thioester by the polyketide synthase AacuL. The atrochrysone carboxyl ACP thioesterase AacuM then breaks the thioester bond and releases the atrochrysone carboxylic acid from AacuL. Atrochrysone carboxylic acid is decarboxylated by the decarboxylase AacuI, and oxidized by the anthrone oxygenase AacuG to yield emodin. Emodin is then reduced to emodin hydroquinone by a yet unidentified oxidoreductase. A-ring reduction by the short chain dehydrogenase AacuN, dehydration by the scytalone dehydratase-like protein AacuK and probable spontaneous re-oxidation, results in overall deoxygenation to chrysophanol. Baeyer-Villiger oxidation by the Baeyer-Villiger monooxygenase (BVMO) AacuH then yields monodictyphenone. Monodictyphenone is transformed into compounds with the tetrahydroxanthone skeleton via methylesterification by the methyltransferase AacuQ, followed by the action of the flavin-dependent monooxygenase AacuC, the isomerase AacuP, and the short chain dehydrogenase/reductase AacuF or AacuD. AacuF and AacuD should accept the same compound as a substrate but perform the ketoreduction with a different stereoselectivity, thus yielding blennolides B and A, respectively. In the final step of the biosynthesis, the cytochrome P450 monooxygenase AacuE accepts blennolide B and/or blennolide A to conduct the dimerization reaction to furnish the tetrahydroxanthone dimers, secalonic acids D, B, and F. This Aspergillus aculeatus (strain ATCC 16872 / CBS 172.66 / WB 5094) protein is Baeyer-Villiger monooxygenase AacuH.